A 323-amino-acid polypeptide reads, in one-letter code: Transcription factor MafB (323 aa).

A Glycyl lysine isopeptide (Lys-Gly) (interchain with G-Cter in SUMO) cross-link involves residue Lys-32. Over residues 34–43 the composition is skewed to basic and acidic residues; the sequence is EPLGRAERPG. Disordered regions lie at residues 34 to 78 and 116 to 210; these read EPLG…PTEQ and PVPQ…VEDR. Residues 54 to 76 show a composition bias toward low complexity; the sequence is SLSSTPLSTPCSSVPSSPSFSPT. 2 stretches are compositionally biased toward basic residues: residues 129–143 and 159–168; these read GAHH…HPHH and AHPHHHHHHQ. Low complexity predominate over residues 192–201; it reads PHATASATAA. The tract at residues 238–263 is basic motif; that stretch reads RLKQKRRTLKNRGYAQSCRYKRVQQK. Residues 238–301 enclose the bZIP domain; it reads RLKQKRRTLK…DAHKVKCEKL (64 aa). The interval 266–287 is leucine-zipper; that stretch reads LENEKTQLIQQVEQLKQEVSRL. Lys-297 is covalently cross-linked (Glycyl lysine isopeptide (Lys-Gly) (interchain with G-Cter in SUMO)).

It belongs to the bZIP family. Maf subfamily. In terms of assembly, homodimer or heterodimer with other bHLH-Zip transcription factors. Binds DNA as a homodimer or a heterodimer. Forms homodimers and heterodimers with FOS, FOSB and FOSL2, but not with JUN proteins (JUN, JUNB and JUND). Interacts with PAX6; the interaction is direct. Interacts with ETS1 and LRP1. Interacts with the intracellular cytoplasmic domain of LRP1 (LRPICD); the interaction results in a moderate reduction of MAFB transcriptional potential. In terms of processing, sumoylated. Sumoylation on Lys-32 and Lys-297 stimulates its transcriptional repression activity and promotes macrophage differentiation from myeloid progenitors.

The protein localises to the nucleus. In terms of biological role, acts as a transcriptional activator or repressor. Plays a pivotal role in regulating lineage-specific hematopoiesis by repressing ETS1-mediated transcription of erythroid-specific genes in myeloid cells. Required for monocytic, macrophage, osteoclast, podocyte and islet beta cell differentiation. Involved in renal tubule survival and F4/80 maturation. Activates the insulin and glucagon promoters. Together with PAX6, transactivates weakly the glucagon gene promoter through the G1 element. SUMO modification controls its transcriptional activity and ability to specify macrophage fate. Binds element G1 on the glucagon promoter. Involved either as an oncogene or as a tumor suppressor, depending on the cell context. Required for the transcriptional activation of HOXB3 in the rhombomere r5 in the hindbrain. The protein is Transcription factor MafB (MAFB) of Macaca fascicularis (Crab-eating macaque).